A 270-amino-acid polypeptide reads, in one-letter code: MNVEKLKKMKGKEKIVMVTAYDAPSARIARDAGIDVILVGDSLGNNVLGYENTIPVTMEEMLIHVAAVKRGAPDAFIVADMPFLSYQTSVEKAVENAGKFLKVGANAVKIEGGEEFGELVQKLVESGIPVMGHIGLTPQFVNRFGGYRVQGKTEKNREYLLRSARELEKRGAFAIVLELVVEEVAKEITESVSIPTIGIGSGRFCDGQVLVWHDLLGLNPDFAPRFSKKYANLYEVILKALQEFRREVKKGLFPTEEHSFTDKSKGGVSS.

Residues D41 and D80 each coordinate Mg(2+). Residues 41–42 (DS), D80, and K109 each bind 3-methyl-2-oxobutanoate. E111 is a Mg(2+) binding site. The active-site Proton acceptor is the E178.

Belongs to the PanB family. In terms of assembly, homodecamer; pentamer of dimers. Mg(2+) is required as a cofactor.

It localises to the cytoplasm. It catalyses the reaction 3-methyl-2-oxobutanoate + (6R)-5,10-methylene-5,6,7,8-tetrahydrofolate + H2O = 2-dehydropantoate + (6S)-5,6,7,8-tetrahydrofolate. It functions in the pathway cofactor biosynthesis; (R)-pantothenate biosynthesis; (R)-pantoate from 3-methyl-2-oxobutanoate: step 1/2. In terms of biological role, catalyzes the reversible reaction in which hydroxymethyl group from 5,10-methylenetetrahydrofolate is transferred onto alpha-ketoisovalerate to form ketopantoate. The sequence is that of 3-methyl-2-oxobutanoate hydroxymethyltransferase from Thermotoga maritima (strain ATCC 43589 / DSM 3109 / JCM 10099 / NBRC 100826 / MSB8).